A 646-amino-acid polypeptide reads, in one-letter code: MPPEQVRARKTPRSWGALTPSLAPWILDYLSSMGFEQPTPVQKSCFDIFRGNKDVVVEAVTGSGKTLAFLIPVVERLLRSEDPAKRHHVQAIIISPTRELASQIYNVLVSFLKFHAPSAHLLPHAKGDEKRPATTEPVVVPQLLVGGTTKAAEDLSTFLRLSPNILIGTPGRLAELLSTPYVKAPSSSFEVLVMDEADRLLDLGFSQELTRILGYLPKQRRTGLFSASLSEAVERLITVGLLYPHKITVRVKSLRDGGIVQERKTPMSLQMSYIVTPASQKIPALCQLLERLEPRPSRSIVFFSTCFAVKYFARVLHGILPPGFSIVSLHGKLEPQVREKNFERFVNAASPTVLLTTDIAARGLDIPQVDLVVQHDPPTDTKVFIHRCGRAGRAGRRGLAVVMLQPGREEGYVQLLDVRQTPISPLAKPPVSVTAADADLASSRIRAQARADRDIYQLAQRAFVSWARSYIEHQATSIFRVADLDWADLAQGYGLLELPKMPEVRGLDRSLGLAIDTESIPFRDGAREKKRLAELEQWKKEKAAREAQRASGGGGDATDPLKRKKNEAWSGKHEHEDVKAARREKKRRKREAQRLGDMTEPEREEQRKLDEMIAEVRRRNAEAPTPAAQAAGSGGGGGDEFEGFDD.

A Q motif motif is present at residues 15–43; that stretch reads WGALTPSLAPWILDYLSSMGFEQPTPVQK. A Helicase ATP-binding domain is found at 46–247; that stretch reads FDIFRGNKDV…TVGLLYPHKI (202 aa). 59–66 serves as a coordination point for ATP; sequence AVTGSGKT. The DEAD box signature appears at 195 to 198; that stretch reads DEAD. The Helicase C-terminal domain occupies 284-434; it reads ALCQLLERLE…PLAKPPVSVT (151 aa). Basic and acidic residues-rich tracts occupy residues 539–548 and 566–581; these read KKEKAAREAQ and NEAW…VKAA. Residues 539–646 form a disordered region; that stretch reads KKEKAAREAQ…GGDEFEGFDD (108 aa). The stretch at 572–623 forms a coiled coil; the sequence is KHEHEDVKAARREKKRRKREAQRLGDMTEPEREEQRKLDEMIAEVRRRNAEA. Basic residues predominate over residues 582-591; the sequence is RREKKRRKRE. Basic and acidic residues predominate over residues 600–621; sequence EPEREEQRKLDEMIAEVRRRNA. A compositionally biased stretch (low complexity) spans 622–631; sequence EAPTPAAQAA.

This sequence belongs to the DEAD box helicase family. DDX55/SPB4 subfamily. In terms of assembly, component of pre-60S ribosomal complexes.

The protein resides in the nucleus. The protein localises to the nucleolus. It catalyses the reaction ATP + H2O = ADP + phosphate + H(+). Its function is as follows. ATP-binding RNA helicase involved in the biogenesis of 60S ribosomal subunits. Binds 90S pre-ribosomal particles and dissociates from pre-60S ribosomal particles after processing of 27SB pre-rRNA. Required for the normal formation of 18S rRNA through the processing of pre-rRNAs at sites A0, A1 and A2, and the normal formation of 25S and 5.8S rRNAs through the processing of pre-rRNAs at sites C1 and C2. This is ATP-dependent rRNA helicase SPB4 from Chaetomium globosum (strain ATCC 6205 / CBS 148.51 / DSM 1962 / NBRC 6347 / NRRL 1970) (Soil fungus).